The chain runs to 71 residues: DNA-directed RNA polymerase subunit omega (71 aa).

The protein belongs to the RNA polymerase subunit omega family. In terms of assembly, the RNAP catalytic core consists of 2 alpha, 1 beta/beta' and 1 omega subunit. When a sigma factor is associated with the core the holoenzyme is formed, which can initiate transcription.

The enzyme catalyses RNA(n) + a ribonucleoside 5'-triphosphate = RNA(n+1) + diphosphate. In terms of biological role, promotes RNA polymerase assembly. Latches the N- and C-terminal regions of the beta' subunit thereby facilitating its interaction with the beta and alpha subunits. This Wolinella succinogenes (strain ATCC 29543 / DSM 1740 / CCUG 13145 / JCM 31913 / LMG 7466 / NCTC 11488 / FDC 602W) (Vibrio succinogenes) protein is DNA-directed RNA polymerase subunit omega.